We begin with the raw amino-acid sequence, 273 residues long: 4-hydroxy-tetrahydrodipicolinate reductase (273 aa).

NAD(+)-binding positions include 11–16 and 106–108; these read GATGKM and GTT. Residue H162 is the Proton donor/acceptor of the active site. H163 contacts (S)-2,3,4,5-tetrahydrodipicolinate. K166 acts as the Proton donor in catalysis. 172 to 173 provides a ligand contact to (S)-2,3,4,5-tetrahydrodipicolinate; it reads GT.

This sequence belongs to the DapB family.

Its subcellular location is the cytoplasm. It catalyses the reaction (S)-2,3,4,5-tetrahydrodipicolinate + NAD(+) + H2O = (2S,4S)-4-hydroxy-2,3,4,5-tetrahydrodipicolinate + NADH + H(+). It carries out the reaction (S)-2,3,4,5-tetrahydrodipicolinate + NADP(+) + H2O = (2S,4S)-4-hydroxy-2,3,4,5-tetrahydrodipicolinate + NADPH + H(+). It functions in the pathway amino-acid biosynthesis; L-lysine biosynthesis via DAP pathway; (S)-tetrahydrodipicolinate from L-aspartate: step 4/4. Its function is as follows. Catalyzes the conversion of 4-hydroxy-tetrahydrodipicolinate (HTPA) to tetrahydrodipicolinate. This is 4-hydroxy-tetrahydrodipicolinate reductase from Synechococcus sp. (strain ATCC 27144 / PCC 6301 / SAUG 1402/1) (Anacystis nidulans).